The following is a 483-amino-acid chain: Probable cysteine protease ATG4 (483 aa).

The Nucleophile role is filled by Cys-141. Residues Asp-315 and His-317 contribute to the active site.

Belongs to the peptidase C54 family.

It is found in the cytoplasm. It localises to the nucleus. Its subcellular location is the preautophagosomal structure. It carries out the reaction [protein]-C-terminal L-amino acid-glycyl-phosphatidylethanolamide + H2O = [protein]-C-terminal L-amino acid-glycine + a 1,2-diacyl-sn-glycero-3-phosphoethanolamine. Cysteine protease that plays a key role in cytoplasm to vacuole transport (Cvt) and autophagy by mediating both proteolytic activation and delipidation of ATG8. Required for selective autophagic degradation of the nucleus (nucleophagy) as well as for mitophagy which contributes to regulate mitochondrial quantity and quality by eliminating the mitochondria to a basal level to fulfill cellular energy requirements and preventing excess ROS production. The protease activity is required for proteolytic activation of ATG8: cleaves the C-terminal amino acid of ATG8 to reveal a C-terminal glycine. ATG8 ubiquitin-like activity requires the exposure of the glycine at the C-terminus for its conjugation to phosphatidylethanolamine (PE) and its insertion to membranes, which is necessary for autophagy. The ATG8-PE conjugate mediates tethering between adjacent membranes and stimulates membrane hemifusion, leading to expansion of the autophagosomal membrane during autophagy. In addition to the protease activity, also catalyzes deconjugation of PE-conjugated forms of ATG8 during macroautophagy: ATG8 delipidation is required to release the protein from membranes, which facilitates multiple events during macroautophagy, and especially for efficient autophagosome biogenesis, the assembly of ATG9-containing tubulovesicular clusters into phagophores/autophagosomes, and for the disassembly of PAS-associated ATG components. ATG8 delipidation by ATG4 also recycles ATG8-PE generated on inappropriate membranes to maintain a reservoir of unlipidated ATG8 that is required for autophagosome formation at the PAS. This is Probable cysteine protease ATG4 (ATG4) from Candida glabrata (strain ATCC 2001 / BCRC 20586 / JCM 3761 / NBRC 0622 / NRRL Y-65 / CBS 138) (Yeast).